Reading from the N-terminus, the 283-residue chain is NAD kinase (283 aa).

The Proton acceptor role is filled by aspartate 65. NAD(+)-binding positions include 65–66, 139–140, arginine 150, arginine 167, aspartate 169, 180–185, and glutamine 239; these read DG, ND, and TGYSVS.

It belongs to the NAD kinase family. Requires a divalent metal cation as cofactor.

The protein localises to the cytoplasm. The enzyme catalyses NAD(+) + ATP = ADP + NADP(+) + H(+). Involved in the regulation of the intracellular balance of NAD and NADP, and is a key enzyme in the biosynthesis of NADP. Catalyzes specifically the phosphorylation on 2'-hydroxyl of the adenosine moiety of NAD to yield NADP. This chain is NAD kinase, found in Nitratidesulfovibrio vulgaris (strain DSM 19637 / Miyazaki F) (Desulfovibrio vulgaris).